The following is a 765-amino-acid chain: Probable exo-1,4-beta-xylosidase bxlB (765 aa).

The N-terminal stretch at 1–25 is a signal peptide; it reads MYSSNSRRAASILACIVSLTQLGFA. N-linked (GlcNAc...) asparagine glycans are attached at residues N67 and N107. D293 is an active-site residue. Residues N345, N412, N423, N464, and N761 are each glycosylated (N-linked (GlcNAc...) asparagine).

The protein belongs to the glycosyl hydrolase 3 family.

The protein resides in the secreted. It carries out the reaction Hydrolysis of (1-&gt;4)-beta-D-xylans, to remove successive D-xylose residues from the non-reducing termini.. Its pathway is glycan degradation; xylan degradation. Its function is as follows. Xylan 1,4-beta-xylosidase involved in the hydrolysis of xylan, a major structural heterogeneous polysaccharide found in plant biomass representing the second most abundant polysaccharide in the biosphere, after cellulose. This Aspergillus terreus (strain NIH 2624 / FGSC A1156) protein is Probable exo-1,4-beta-xylosidase bxlB (bxlB).